The following is a 299-amino-acid chain: Oxygen-dependent coproporphyrinogen-III oxidase (299 aa).

A substrate-binding site is contributed by Ser-92. 2 residues coordinate a divalent metal cation: His-96 and His-106. His-106 functions as the Proton donor in the catalytic mechanism. Substrate is bound at residue 108 to 110; it reads NVR. 2 residues coordinate a divalent metal cation: His-145 and His-175. Residues 239–274 form an important for dimerization region; it reads YVEFNLVYDRGTLFGLQSGGRAESILMSLPPQVRWE. 257–259 serves as a coordination point for substrate; it reads GGR.

The protein belongs to the aerobic coproporphyrinogen-III oxidase family. In terms of assembly, homodimer. A divalent metal cation serves as cofactor.

It is found in the cytoplasm. The catalysed reaction is coproporphyrinogen III + O2 + 2 H(+) = protoporphyrinogen IX + 2 CO2 + 2 H2O. The protein operates within porphyrin-containing compound metabolism; protoporphyrin-IX biosynthesis; protoporphyrinogen-IX from coproporphyrinogen-III (O2 route): step 1/1. Functionally, involved in the heme biosynthesis. Catalyzes the aerobic oxidative decarboxylation of propionate groups of rings A and B of coproporphyrinogen-III to yield the vinyl groups in protoporphyrinogen-IX. This Xanthomonas campestris pv. campestris (strain B100) protein is Oxygen-dependent coproporphyrinogen-III oxidase.